A 472-amino-acid polypeptide reads, in one-letter code: N(6)-adenine-specific methyltransferase METTL4 (472 aa).

Belongs to the MT-A70-like family.

Its subcellular location is the nucleus. The protein resides in the cytoplasm. It localises to the cytosol. It is found in the mitochondrion matrix. The catalysed reaction is a 2'-O-methyladenosine in U2 snRNA + S-adenosyl-L-methionine = an N(6)-methyl-2'-O-methyladenosine in U2 snRNA + S-adenosyl-L-homocysteine + H(+). The enzyme catalyses a 2'-deoxyadenosine in DNA + S-adenosyl-L-methionine = an N(6)-methyl-2'-deoxyadenosine in DNA + S-adenosyl-L-homocysteine + H(+). In terms of biological role, n(6)-adenine-specific methyltransferase that can methylate both RNAs and DNA. Acts as a N(6)-adenine-specific RNA methyltransferase by catalyzing formation of N6,2'-O-dimethyladenosine (m6A(m)) on internal positions of U2 small nuclear RNA (snRNA): methylates the 6th position of adenine residues with a pre-deposited 2'-O-methylation. Internal m6A(m) methylation of snRNAs regulates RNA splicing. Also able to act as a N(6)-adenine-specific DNA methyltransferase by mediating methylation of DNA on the 6th position of adenine (N(6)-methyladenosine). The existence of N(6)-methyladenosine (m6A) on DNA is however unclear in mammals, and additional evidences are required to confirm the role of the N(6)-adenine-specific DNA methyltransferase activity of METTL4 in vivo. Acts as a regulator of mitochondrial transcript levels and mitochondrial DNA (mtDNA) copy number by mediating mtDNA N(6)-methylation: m6A on mtDNA reduces transcription by repressing TFAM DNA-binding and bending. N(6)-methyladenosine deposition by METTL4 regulates Polycomb silencing by triggering ubiquitination and degradation of sensor proteins ASXL1 and MPND, leading to inactivation of the PR-DUB complex and subsequent preservation of Polycomb silencing. This Homo sapiens (Human) protein is N(6)-adenine-specific methyltransferase METTL4.